A 721-amino-acid chain; its full sequence is Protein mu-NS (721 aa).

The tract at residues 1 to 13 (MASFKGFSVNTVP) is interaction with sigma-NS. The RNA-binding stretch occupies residues 1-38 (MASFKGFSVNTVPVSKAKRDISSLAATPGIRSQPFTPS). The segment at 14–40 (VSKAKRDISSLAATPGIRSQPFTPSVD) is interaction with mu-2. The involved in the formation of factory-like inclusions stretch occupies residues 471–721 (SSDMVDGIKL…IDFSVPTDEL (251 aa)). Coiled coils occupy residues 523 to 560 (LLSQLRELSSEVTRLQMELSRTQSLNAQLEADAKSAQA) and 628 to 686 (QMNG…NQRQ).

Belongs to the orthoreovirus mu-NS protein family. Interacts with mu-2. Interacts with sigma-NS; in viral factories. Interacts with the inner capsid proteins lambda-1 and sigma-2, and outer capsid protein lambda-2; in viral factories. The N-terminus is blocked.

The protein resides in the host cytoplasm. Non-structural protein implicated with protein sigma-NS in forming the matrix of viral factories, which are large inclusions in the host cytoplasm where replication intermediates are assembled and viral RNA replication takes place. Together with mu-2, recruits the other core proteins to these factories. The chain is Protein mu-NS (M3) from Mammalia (T1L).